The chain runs to 234 residues: UDP-2,3-diacylglucosamine hydrolase (234 aa).

Positions 9, 11, 42, 80, and 115 each coordinate Mn(2+). Residue 80-81 (NR) participates in substrate binding. Residues aspartate 123, serine 161, lysine 165, lysine 168, and histidine 196 each coordinate substrate. Residues histidine 196 and histidine 198 each contribute to the Mn(2+) site.

It belongs to the LpxH family. Mn(2+) serves as cofactor.

Its subcellular location is the cell inner membrane. The catalysed reaction is UDP-2-N,3-O-bis[(3R)-3-hydroxytetradecanoyl]-alpha-D-glucosamine + H2O = 2-N,3-O-bis[(3R)-3-hydroxytetradecanoyl]-alpha-D-glucosaminyl 1-phosphate + UMP + 2 H(+). It functions in the pathway glycolipid biosynthesis; lipid IV(A) biosynthesis; lipid IV(A) from (3R)-3-hydroxytetradecanoyl-[acyl-carrier-protein] and UDP-N-acetyl-alpha-D-glucosamine: step 4/6. Functionally, hydrolyzes the pyrophosphate bond of UDP-2,3-diacylglucosamine to yield 2,3-diacylglucosamine 1-phosphate (lipid X) and UMP by catalyzing the attack of water at the alpha-P atom. Involved in the biosynthesis of lipid A, a phosphorylated glycolipid that anchors the lipopolysaccharide to the outer membrane of the cell. This chain is UDP-2,3-diacylglucosamine hydrolase, found in Histophilus somni (strain 2336) (Haemophilus somnus).